The primary structure comprises 445 residues: Phospho-alpha-glucosidase PagL (445 aa).

4–71 (YSICIVGGGS…ELEEVIWTTD (68 aa)) contacts NAD(+). Substrate-binding residues include Arg-94 and Asn-148. Cys-171 is a binding site for Mn(2+). The active-site Proton donor is Asp-172. His-201 contacts Mn(2+). Residue Tyr-264 is the Proton acceptor of the active site. Substrate is bound at residue Arg-284.

Belongs to the glycosyl hydrolase 4 family. As to quaternary structure, homotetramer. NAD(+) serves as cofactor. Mn(2+) is required as a cofactor.

In terms of biological role, phospho-alpha-glucosidase that catalyzes the hydrolysis of p-nitrophenyl-alpha-D-glucopyranoside 6-phosphate, but is not able to cleave 'natural' phospho-alpha-glucosides produced via the phosphoenolpyruvate-dependent sugar phosphotransferase system (PEP-PTS). This Clostridium acetobutylicum (strain ATCC 824 / DSM 792 / JCM 1419 / IAM 19013 / LMG 5710 / NBRC 13948 / NRRL B-527 / VKM B-1787 / 2291 / W) protein is Phospho-alpha-glucosidase PagL (pagL).